The sequence spans 469 residues: Dihydrolipoyl dehydrogenase (469 aa).

FAD is bound by residues Glu-40–Cys-48, Lys-57, and Ala-120. The cysteines at positions 48 and 53 are disulfide-linked. NAD(+) contacts are provided by residues Gly-186–Ile-190, Glu-209, and Ala-275–Val-278. The FAD site is built by Asp-317 and Ala-325. His-450 functions as the Proton acceptor in the catalytic mechanism.

Belongs to the class-I pyridine nucleotide-disulfide oxidoreductase family. As to quaternary structure, homodimer. Requires FAD as cofactor.

The protein resides in the cytoplasm. The enzyme catalyses N(6)-[(R)-dihydrolipoyl]-L-lysyl-[protein] + NAD(+) = N(6)-[(R)-lipoyl]-L-lysyl-[protein] + NADH + H(+). In terms of biological role, lipoamide dehydrogenase is a component of the alpha-ketoacid dehydrogenase complexes. The sequence is that of Dihydrolipoyl dehydrogenase (lpd) from Chlorobaculum parvum (strain DSM 263 / NCIMB 8327) (Chlorobium vibrioforme subsp. thiosulfatophilum).